A 415-amino-acid chain; its full sequence is MIRVMAGAKFLNGMVKVAEDAYLFHVIHSKSLAVLMGTADSDVPLPLLFSKFPGSPTNAIPLYCYERPRLSLARLILSGHPYALHSELEIGFSDAGGEITVYRCPIVKYTDFRDEPVKADCTLMFSSREDMSDATPLTEDLYPRIGSRCKIKHVTIDESKNQSFFFDKDAAIRAPAPCSPAPCSPAPGSPPPPAPPAAPAKPIIKCQLEPADEELARFTGYARIFHAISTHSPKIGSCGAASYNTVLIMTRSQNSLRVLPRDGSITPRHNLFLKHVILKEMGLENSVQDFEVLYGDHLGPVTRQQAEEFRETVRGLRCKLEDCVFVLNSVCAAPFSKPVAAGSTGPHTLLLLEKYFLTFNPRDKANAINFGAAVTELIFGGVPFTKILAFVQKFIEILTETPEDNMFKIYALLTN.

Positions 179–199 (SPAPCSPAPGSPPPPAPPAAP) are enriched in pro residues. Positions 179-200 (SPAPCSPAPGSPPPPAPPAAPA) are disordered.

This sequence belongs to the herpesviridae BTRF1 family.

This is an uncharacterized protein from Equus caballus (Horse).